The sequence spans 864 residues: DNA mismatch repair protein MutS (864 aa).

Position 607–614 (Gly607–Ser614) interacts with ATP.

Belongs to the DNA mismatch repair MutS family.

In terms of biological role, this protein is involved in the repair of mismatches in DNA. It is possible that it carries out the mismatch recognition step. This protein has a weak ATPase activity. The polypeptide is DNA mismatch repair protein MutS (Neisseria meningitidis serogroup B (strain ATCC BAA-335 / MC58)).